We begin with the raw amino-acid sequence, 156 residues long: ATP synthase subunit b (156 aa).

A helical membrane pass occupies residues 7–27 (LFVQAIVFLILVWFTMQFVWP).

This sequence belongs to the ATPase B chain family. F-type ATPases have 2 components, F(1) - the catalytic core - and F(0) - the membrane proton channel. F(1) has five subunits: alpha(3), beta(3), gamma(1), delta(1), epsilon(1). F(0) has three main subunits: a(1), b(2) and c(10-14). The alpha and beta chains form an alternating ring which encloses part of the gamma chain. F(1) is attached to F(0) by a central stalk formed by the gamma and epsilon chains, while a peripheral stalk is formed by the delta and b chains.

The protein localises to the cell inner membrane. In terms of biological role, f(1)F(0) ATP synthase produces ATP from ADP in the presence of a proton or sodium gradient. F-type ATPases consist of two structural domains, F(1) containing the extramembraneous catalytic core and F(0) containing the membrane proton channel, linked together by a central stalk and a peripheral stalk. During catalysis, ATP synthesis in the catalytic domain of F(1) is coupled via a rotary mechanism of the central stalk subunits to proton translocation. Component of the F(0) channel, it forms part of the peripheral stalk, linking F(1) to F(0). The sequence is that of ATP synthase subunit b from Verminephrobacter eiseniae (strain EF01-2).